The following is a 470-amino-acid chain: Ras-like GTPase HI_1637 (470 aa).

A Walker A motif motif is present at residues 27-34; that stretch reads GLSRSGKT. 12 residues coordinate GTP: serine 29, glycine 32, lysine 33, threonine 34, alanine 35, tryptophan 98, serine 101, threonine 102, arginine 103, lysine 342, aspartate 344, and histidine 345. GDP contacts are provided by glycine 32, lysine 33, threonine 34, alanine 35, tryptophan 98, serine 101, and threonine 102. Lysine 342, aspartate 344, histidine 345, alanine 383, and valine 384 together coordinate GDP. Residue valine 384 coordinates GTP.

The protein to E.coli YcjX. Monomer in solution. Mg(2+) serves as cofactor.

It carries out the reaction GTP + H2O = GDP + phosphate + H(+). Alternates between an inactive form bound to GDP and an active form bound to GTP. Likely activated by a guanine nucleotide-exchange factor (GEF). In terms of biological role, binds GTP and GDP. Has intrinsic GTPase activity. Does not hydrolyze ATP. May act as a transducer of stress responses. The chain is Ras-like GTPase HI_1637 from Haemophilus influenzae (strain ATCC 51907 / DSM 11121 / KW20 / Rd).